The sequence spans 715 residues: Fatty acid oxidation complex subunit alpha (715 aa).

The interval Met1–Ala190 is enoyl-CoA hydratase/isomerase. Asp297 contributes to the substrate binding site. The 3-hydroxyacyl-CoA dehydrogenase stretch occupies residues His312–Asn715. Residues Met325, Asp344, Val401 to Glu403, Lys408, and Ser430 each bind NAD(+). His451 serves as the catalytic For 3-hydroxyacyl-CoA dehydrogenase activity. Asn454 is a binding site for NAD(+). Residues Asn501 and Tyr660 each coordinate substrate.

This sequence in the N-terminal section; belongs to the enoyl-CoA hydratase/isomerase family. It in the C-terminal section; belongs to the 3-hydroxyacyl-CoA dehydrogenase family. As to quaternary structure, heterotetramer of two alpha chains (FadB) and two beta chains (FadA).

It catalyses the reaction a (3S)-3-hydroxyacyl-CoA + NAD(+) = a 3-oxoacyl-CoA + NADH + H(+). The catalysed reaction is a (3S)-3-hydroxyacyl-CoA = a (2E)-enoyl-CoA + H2O. The enzyme catalyses a 4-saturated-(3S)-3-hydroxyacyl-CoA = a (3E)-enoyl-CoA + H2O. It carries out the reaction (3S)-3-hydroxybutanoyl-CoA = (3R)-3-hydroxybutanoyl-CoA. It catalyses the reaction a (3Z)-enoyl-CoA = a 4-saturated (2E)-enoyl-CoA. The catalysed reaction is a (3E)-enoyl-CoA = a 4-saturated (2E)-enoyl-CoA. The protein operates within lipid metabolism; fatty acid beta-oxidation. Functionally, involved in the aerobic and anaerobic degradation of long-chain fatty acids via beta-oxidation cycle. Catalyzes the formation of 3-oxoacyl-CoA from enoyl-CoA via L-3-hydroxyacyl-CoA. It can also use D-3-hydroxyacyl-CoA and cis-3-enoyl-CoA as substrate. This Pseudomonas putida (strain ATCC 47054 / DSM 6125 / CFBP 8728 / NCIMB 11950 / KT2440) protein is Fatty acid oxidation complex subunit alpha.